Reading from the N-terminus, the 1977-residue chain is Protein rotatin homolog (1977 aa).

The segment at 141–166 is disordered; sequence SVSSLSSNDIPSQATESADSSSNQIY.

The protein belongs to the rotatin family. Interacts with Rcd4;this complex is recruited to daughter centrioles before their conversion to centrosomes.

It localises to the cytoplasm. It is found in the cytoskeleton. The protein localises to the microtubule organizing center. Its subcellular location is the centrosome. The protein resides in the centriole. In terms of biological role, participes in the structural integrity of both centrioles and basal bodies and in centriole cohesion. Participates in the later stages of centriole assembly through the interaction with Rcd4 leading to the centriole to centrosome conversion. The sequence is that of Protein rotatin homolog from Drosophila melanogaster (Fruit fly).